The chain runs to 290 residues: 4-hydroxy-tetrahydrodipicolinate synthase (290 aa).

A pyruvate-binding site is contributed by threonine 48. Tyrosine 137 acts as the Proton donor/acceptor in catalysis. The active-site Schiff-base intermediate with substrate is the lysine 165. Isoleucine 206 is a binding site for pyruvate.

The protein belongs to the DapA family. Homotetramer; dimer of dimers.

The protein localises to the cytoplasm. The catalysed reaction is L-aspartate 4-semialdehyde + pyruvate = (2S,4S)-4-hydroxy-2,3,4,5-tetrahydrodipicolinate + H2O + H(+). The protein operates within amino-acid biosynthesis; L-lysine biosynthesis via DAP pathway; (S)-tetrahydrodipicolinate from L-aspartate: step 3/4. Its function is as follows. Catalyzes the condensation of (S)-aspartate-beta-semialdehyde [(S)-ASA] and pyruvate to 4-hydroxy-tetrahydrodipicolinate (HTPA). The polypeptide is 4-hydroxy-tetrahydrodipicolinate synthase (Ligilactobacillus salivarius (strain UCC118) (Lactobacillus salivarius)).